Reading from the N-terminus, the 70-residue chain is DNA-directed RNA polymerase subunit epsilon (70 aa).

This sequence belongs to the RNA polymerase subunit epsilon family. In terms of assembly, RNAP is composed of a core of 2 alpha, a beta and a beta' subunit. The core is associated with a delta subunit, and at least one of epsilon or omega. When a sigma factor is associated with the core the holoenzyme is formed, which can initiate transcription.

The enzyme catalyses RNA(n) + a ribonucleoside 5'-triphosphate = RNA(n+1) + diphosphate. In terms of biological role, a non-essential component of RNA polymerase (RNAP). The chain is DNA-directed RNA polymerase subunit epsilon from Enterococcus faecalis (strain ATCC 700802 / V583).